We begin with the raw amino-acid sequence, 1374 residues long: MSMADEDEEHTKALKAKEMMLPLFQKYNFTLKHNKLPIRHSKDDILARIRENPVIVLEGPTGCGKTTQVPQFILEEAYHRKEYCNIIVTQPRKIAAMSIAKRVSEERKCELGTLVGFKVGLKECLSPDTRLLYCTTGVLLQSLINSKTMANYTHVILDEIHEREVDMDFLLIVVRRFLATNSSKTKVILMSATIDSKAFAEYFKTPKKVGYLTAPIISVDRPRLYEVKEFYYDDLDKLRLDFAIDYENPGISSHMYTVAAKLVLVCDRLIENMHGEERMEYKPTVLIFLPGINEIDRMDHVLRETLTRIVNPKEKPNLDIHRLHSILPADEQVKVFRKPAPGQRKVILSTNIAESSITVPDVKFIIDFCLQRVLFTDTTTNFSTLRTEWASQANCIQRQGRAGRVMDGRVYRLVDRRFYENQMRFSTSPEILRCPLENVILKAKLLEMGPPHSILALAMNPPDLSDIRNTVLQLKELGALVQTVKGNYEQLDGDLTYMGRIMAKLPLDLRISKLIILGYIFSVLEESIIIAAGMNEKNIFLNQNSVRGYSQKMYWADGSGSDGIAILNAYIAWKSRKEQAGNESDMASWTRRMSLDLKCLMDMAELIREIKDRLNHVGMKEVSGPGRVVWSSREKTVILKVIMAGAFYPNYFIPMSVGGKELMERQSFTELGGRDPCNTVFFTGFDHEKYIGPLYTVQIKKLLSEGDFSKHQNMKVMYDRTTNRIFVTFLGSNDEHDQRGAFMPGKVHADVYRAIKLRKLGSRNRIMEIRTMRQRDAIEFATEMNLGHWEDANGWVPRRKVIRNAHLSVIPAIHQASMVCQVTNVIHCNKFYLRPEDTKNKDIFMDIHSKLNSRGYRLERFDPDWQFAVGQMVAAPLEEGSDRYARAVLKNYKNIRSTGDVMWTVFFLDYGHSSVLGQSAFRKLDGPLAYMKEIPQRVFEATLSEIQPSAIISPQGIWTAQSINRFKEMTLGKIFVVDVYSVVNDVASVVLKKGDEVPINSELIRLKFAQYAEESYISKLDHDMRERKQREMSLDEDVRYEVYHSSKNNQLKYEEDELEDVSPPEEKLRCKVMLSGPHSPLETTASSTVRSGVMKPVTIENDSVNSILLDSNPQDTHEKMLVGAFVHEQGNRLVVRQASMMPNIPGFGPLMALIFCPTCQMKKDEEETRVVSILTGLGCDKNTGESLFPEHDLALTLDVVLSDDDITEINALRYTMDTILHTDQDQTVPKFGDVSIENLKAKVKQYIIKILEHERKFMDIRHAPNDYDWKLVEENNAAEASSSSKKRKQDFNIYDNAIYPLLPPLGLLPVSAKQLDFLKRHCRELHKLALTDVNLPRHGITCQMCNTILETLPQLRIHLYSKLHRDRESQIKFR.

Positions 46–212 (LARIRENPVI…FKTPKKVGYL (167 aa)) constitute a Helicase ATP-binding domain. 59–66 (GPTGCGKT) contacts ATP. Positions 158 to 161 (DEIH) match the DEAH box motif. A Helicase C-terminal domain is found at 265–447 (VCDRLIENMH…NVILKAKLLE (183 aa)). In terms of domain architecture, Tudor spans 866–931 (QFAVGQMVAA…RKLDGPLAYM (66 aa)).

It belongs to the DEAD box helicase family. DEAH subfamily.

Its subcellular location is the cytoplasm. The catalysed reaction is ATP + H2O = ADP + phosphate + H(+). Functionally, probable ATP-binding RNA helicase which plays a central role during gametogenesis by repressing transposable elements and preventing their mobilization, which is essential for the germline integrity. Acts via the piRNA metabolic process, which mediates the repression of transposable elements during meiosis by forming complexes composed of piRNAs and Piwi proteins and govern the methylation and subsequent repression of transposons. The chain is Probable ATP-dependent RNA helicase spindle-E (spn-E) from Aedes aegypti (Yellowfever mosquito).